A 103-amino-acid polypeptide reads, in one-letter code: NADH-quinone oxidoreductase subunit K (103 aa).

3 consecutive transmembrane segments (helical) span residues 6–26 (LAHYLVLGAVLFAISIVGIFL), 32–52 (IVLLMAIELMLLAVNLNFVAF), and 63–83 (VFVFFILTVAAAESAIGLAIL).

The protein belongs to the complex I subunit 4L family. In terms of assembly, NDH-1 is composed of 14 different subunits. Subunits NuoA, H, J, K, L, M, N constitute the membrane sector of the complex.

Its subcellular location is the cell inner membrane. It carries out the reaction a quinone + NADH + 5 H(+)(in) = a quinol + NAD(+) + 4 H(+)(out). Functionally, NDH-1 shuttles electrons from NADH, via FMN and iron-sulfur (Fe-S) centers, to quinones in the respiratory chain. The immediate electron acceptor for the enzyme in this species is believed to be ubiquinone. Couples the redox reaction to proton translocation (for every two electrons transferred, four hydrogen ions are translocated across the cytoplasmic membrane), and thus conserves the redox energy in a proton gradient. The sequence is that of NADH-quinone oxidoreductase subunit K from Ralstonia pickettii (strain 12D).